Consider the following 128-residue polypeptide: Holo-[acyl-carrier-protein] synthase (128 aa).

Residues D8 and E57 each coordinate Mg(2+).

The protein belongs to the P-Pant transferase superfamily. AcpS family. The cofactor is Mg(2+).

The protein resides in the cytoplasm. It carries out the reaction apo-[ACP] + CoA = holo-[ACP] + adenosine 3',5'-bisphosphate + H(+). Functionally, transfers the 4'-phosphopantetheine moiety from coenzyme A to a Ser of acyl-carrier-protein. The polypeptide is Holo-[acyl-carrier-protein] synthase (Syntrophus aciditrophicus (strain SB)).